The sequence spans 462 residues: Metal cation symporter ZIP14 (462 aa).

The N-terminal stretch at 1–16 (MPLLLLSALLPFSLMA) is a signal peptide. Residues 17–138 (GPTPSTGKEL…PSPGEVWGYG (122 aa)) are Extracellular-facing. N-linked (GlcNAc...) asparagine glycosylation is found at Asn42, Asn68, Asn83, and Asn119. Residues 139-159 (FLCVTVISLCSLFGAGVVPFM) traverse the membrane as a helical segment. Topologically, residues 160 to 167 (KKACYKRL) are cytoplasmic. Residues 168–188 (LLFCIALAIGTLFSNALFQLI) form a helical membrane-spanning segment. The Extracellular segment spans residues 189–201 (PEAFGFNPLEDSY). The helical transmembrane segment at 202–222 (VFTSSVIFGGFYLFFFTEKVL) threads the bilayer. Residues 223 to 322 (KMMLKQKHEH…SDGLHNFIDG (100 aa)) are Cytoplasmic-facing. An HHHGHXHX-motif motif is present at residues 230 to 237 (HEHGHSHY). The disordered stretch occupies residues 235 to 285 (SHYSADTSKRDAEEGVTEKLQNGDLDHMIPPPHGSESDLRGDEKAVQQQDL). Composition is skewed to basic and acidic residues over residues 241–251 (TSKRDAEEGVT) and 269–279 (SESDLRGDEKA). A helical membrane pass occupies residues 323-343 (LAIGASFTVSVFQGVSTSIAI). Residues 344 to 367 (LCEEFPHELGDFVILLNAGMSIPQ) are Extracellular-facing. Positions 346–351 (EEFPHE) match the XEXPHE-motif motif. Residues 368-388 (ALFFNFLSACCCYLGLAFGIL) traverse the membrane as a helical segment. The Cytoplasmic portion of the chain corresponds to 389 to 396 (AGSHFSSN). Residues 397–417 (WIFALAGGMFLYIALSDMFPE) traverse the membrane as a helical segment. The Extracellular portion of the chain corresponds to 418-431 (MNEVSKEDEEGGRA). Residues 432–452 (FSAFMIQNAGLLTGFAIMLLL) form a helical membrane-spanning segment. Topologically, residues 453–462 (TTFSGQIQLG) are cytoplasmic.

This sequence belongs to the ZIP transporter (TC 2.A.5) family. In terms of assembly, homotrimer.

The protein resides in the cell membrane. It is found in the apical cell membrane. It localises to the basolateral cell membrane. Its subcellular location is the early endosome membrane. The protein localises to the late endosome membrane. The protein resides in the lysosome membrane. The catalysed reaction is Zn(2+)(out) + 2 hydrogencarbonate(out) = Zn(2+)(in) + 2 hydrogencarbonate(in). It carries out the reaction Mn(2+)(out) + 2 hydrogencarbonate(out) = Mn(2+)(in) + 2 hydrogencarbonate(in). It catalyses the reaction Fe(2+)(out) + 2 hydrogencarbonate(out) = Fe(2+)(in) + 2 hydrogencarbonate(in). The enzyme catalyses Cd(2+)(out) + 2 hydrogencarbonate(out) = Cd(2+)(in) + 2 hydrogencarbonate(in). Functionally, electroneutral transporter of the plasma membrane mediating the cellular uptake of the divalent metal cations zinc, manganese and iron that are important for tissue homeostasis, metabolism, development and immunity. Functions as an energy-dependent symporter, transporting through the membranes an electroneutral complex composed of a divalent metal cation and two bicarbonate anions. Beside these endogenous cellular substrates, can also import cadmium a non-essential metal which is cytotoxic and carcinogenic. This Xenopus tropicalis (Western clawed frog) protein is Metal cation symporter ZIP14.